The sequence spans 99 residues: NADH dehydrogenase [ubiquinone] 1 alpha subcomplex subunit 2 (99 aa).

The residue at position 2 (Ala-2) is an N-acetylalanine. A disulfide bond links Cys-24 and Cys-58. Lys-64 carries the post-translational modification N6-acetyllysine; alternate. Lys-64 is subject to N6-succinyllysine; alternate.

The protein belongs to the complex I NDUFA2 subunit family. In terms of assembly, complex I is composed of 45 different subunits.

The protein localises to the mitochondrion inner membrane. Accessory subunit of the mitochondrial membrane respiratory chain NADH dehydrogenase (Complex I), that is believed not to be involved in catalysis. Complex I functions in the transfer of electrons from NADH to the respiratory chain. The immediate electron acceptor for the enzyme is believed to be ubiquinone. In Homo sapiens (Human), this protein is NADH dehydrogenase [ubiquinone] 1 alpha subcomplex subunit 2 (NDUFA2).